Consider the following 188-residue polypeptide: Elongation factor P-like protein (188 aa).

The protein belongs to the elongation factor P family.

The chain is Elongation factor P-like protein from Vibrio campbellii (strain ATCC BAA-1116).